Here is a 97-residue protein sequence, read N- to C-terminus: Small ribosomal subunit protein bS6 (97 aa).

This sequence belongs to the bacterial ribosomal protein bS6 family.

In terms of biological role, binds together with bS18 to 16S ribosomal RNA. This chain is Small ribosomal subunit protein bS6 (rpsF), found in Lactococcus lactis subsp. lactis (strain IL1403) (Streptococcus lactis).